A 419-amino-acid chain; its full sequence is UDP-N-acetylglucosamine 1-carboxyvinyltransferase (419 aa).

22–23 (KN) is a phosphoenolpyruvate binding site. Arg92 contributes to the UDP-N-acetyl-alpha-D-glucosamine binding site. Cys116 serves as the catalytic Proton donor. A 2-(S-cysteinyl)pyruvic acid O-phosphothioketal modification is found at Cys116. 2 residues coordinate UDP-N-acetyl-alpha-D-glucosamine: Asp307 and Val329.

This sequence belongs to the EPSP synthase family. MurA subfamily.

The protein localises to the cytoplasm. The enzyme catalyses phosphoenolpyruvate + UDP-N-acetyl-alpha-D-glucosamine = UDP-N-acetyl-3-O-(1-carboxyvinyl)-alpha-D-glucosamine + phosphate. Its pathway is cell wall biogenesis; peptidoglycan biosynthesis. In terms of biological role, cell wall formation. Adds enolpyruvyl to UDP-N-acetylglucosamine. The protein is UDP-N-acetylglucosamine 1-carboxyvinyltransferase of Pseudothermotoga lettingae (strain ATCC BAA-301 / DSM 14385 / NBRC 107922 / TMO) (Thermotoga lettingae).